We begin with the raw amino-acid sequence, 291 residues long: 4-diphosphocytidyl-2-C-methyl-D-erythritol kinase (291 aa).

Lys8 is an active-site residue. Residue 89-99 (PIGAGVGGGSS) participates in ATP binding. Asp131 is a catalytic residue.

Belongs to the GHMP kinase family. IspE subfamily.

It carries out the reaction 4-CDP-2-C-methyl-D-erythritol + ATP = 4-CDP-2-C-methyl-D-erythritol 2-phosphate + ADP + H(+). It participates in isoprenoid biosynthesis; isopentenyl diphosphate biosynthesis via DXP pathway; isopentenyl diphosphate from 1-deoxy-D-xylulose 5-phosphate: step 3/6. Functionally, catalyzes the phosphorylation of the position 2 hydroxy group of 4-diphosphocytidyl-2C-methyl-D-erythritol. This Chlamydia caviae (strain ATCC VR-813 / DSM 19441 / 03DC25 / GPIC) (Chlamydophila caviae) protein is 4-diphosphocytidyl-2-C-methyl-D-erythritol kinase.